Reading from the N-terminus, the 717-residue chain is Proline-rich receptor-like protein kinase PERK2 (717 aa).

Positions 1 to 197 (MSSAPPPGGT…GSLSPPPPAS (197 aa)) are enriched in pro residues. A disordered region spans residues 1-221 (MSSAPPPGGT…GSSPPAQSSK (221 aa)). Residues 1-228 (MSSAPPPGGT…SSKELSKGAM (228 aa)) are Extracellular-facing. The span at 198 to 220 (PSGGRSPSTPSTTPGSSPPAQSS) shows a compositional bias: low complexity. The helical transmembrane segment at 229 to 249 (VGIAIGGGFVLLVALALIFFL) threads the bilayer. Residues 250–717 (CKKKRRRDNE…NIKRPGQGYG (468 aa)) are Cytoplasmic-facing. The disordered stretch occupies residues 258-323 (NEAPPAPIDG…YDSNYSDQSV (66 aa)). Over residues 289–303 (VPPPKSPSSAPPRPP) the composition is skewed to pro residues. The span at 307–322 (SSGSSGDYDSNYSDQS) shows a compositional bias: low complexity. The 278-residue stretch at 354 to 631 (FSEANLLGQG…QVARVLEGNI (278 aa)) folds into the Protein kinase domain. ATP-binding positions include 360 to 368 (LGQGGFGYV) and Lys382. Asp478 functions as the Proton acceptor in the catalytic mechanism. Composition is skewed to polar residues over residues 632–644 (SPSD…TPGH) and 692–705 (SWSS…QGKA). 2 disordered regions span residues 632-665 (SPSD…DNEG) and 690-717 (YPSW…QGYG).

This sequence belongs to the protein kinase superfamily. Ser/Thr protein kinase family. As to expression, mostly expressed in inflorescence bolt, flower buds and siliques, and, to a lower extent, in roots, seedlings and leaves.

It is found in the cell membrane. It carries out the reaction L-seryl-[protein] + ATP = O-phospho-L-seryl-[protein] + ADP + H(+). The enzyme catalyses L-threonyl-[protein] + ATP = O-phospho-L-threonyl-[protein] + ADP + H(+). The protein is Proline-rich receptor-like protein kinase PERK2 (PERK2) of Arabidopsis thaliana (Mouse-ear cress).